Consider the following 80-residue polypeptide: MVVIRLARGGAKKNPYYRLMVADQRKSTNGRFIEQVGFYNPTARGQEEPLRLDMARIEHWVGQGAQLSPRVAKLVKDASK.

This sequence belongs to the bacterial ribosomal protein bS16 family.

This Hydrogenovibrio crunogenus (strain DSM 25203 / XCL-2) (Thiomicrospira crunogena) protein is Small ribosomal subunit protein bS16.